The following is a 165-amino-acid chain: Trypsin alpha-3 (165 aa).

Residues 1–163 (NSGGVLVSVA…LRSWVVSAAN (163 aa)) form the Peptidase S1 domain. Catalysis depends on Asp-26, which acts as the Charge relay system. Intrachain disulfides connect Cys-89-Cys-106 and Cys-115-Cys-139. Ser-119 (charge relay system) is an active-site residue.

It belongs to the peptidase S1 family.

It localises to the secreted. The protein localises to the extracellular space. The enzyme catalyses Preferential cleavage: Arg-|-Xaa, Lys-|-Xaa.. This chain is Trypsin alpha-3, found in Lucilia cuprina (Green bottle fly).